We begin with the raw amino-acid sequence, 783 residues long: Tricorn protease-interacting factor F2 (783 aa).

Residues Glu-107 and 236-240 (GAMEN) each bind substrate. Residue His-271 participates in Zn(2+) binding. The active-site Proton acceptor is the Glu-272. 2 residues coordinate Zn(2+): His-275 and Glu-294.

It belongs to the peptidase M1 family. In terms of assembly, monomer. Part of the Tricorn proteolytic complex. The cofactor is Zn(2+).

It is found in the cytoplasm. Its function is as follows. Proteases F1, F2 and F3 degrade oligopeptides produced by Tricorn (themselves probably produced by the proteasome), yielding free amino acids. In Thermoplasma volcanium (strain ATCC 51530 / DSM 4299 / JCM 9571 / NBRC 15438 / GSS1), this protein is Tricorn protease-interacting factor F2 (trf2).